Here is a 257-residue protein sequence, read N- to C-terminus: Nuclear receptor subfamily 0 group B member 2 (257 aa).

The NR LBD domain maps to 16 to 257 (SRPAILYALL…GLLGDMLLLR (242 aa)). R57 is modified (symmetric dimethylarginine; by PRMT5).

The protein belongs to the nuclear hormone receptor family. NR0 subfamily. As to quaternary structure, interacts (via N-terminus) with NEUROD1 (via N-terminus and C-terminus). Interacts with ID2. Interacts with RORG, NFIL3, NR1D1 and BHLHE41. Heterodimer; efficient DNA binding requires dimerization with another bHLH protein. Interacts with RARA, RXRA, THRB, NR5A1, NR5A2, NR1I3, PPARA, PPARG and EID1. Interacts with HNF4A; the resulting heterodimer is transcriptionally inactive. Interacts with DDX3X; this interaction disrupts the interaction between HNF4 and NR0B2/SHP that forms inactive heterodimers and enhances the formation of active HNF4 homodimers. In terms of processing, arginine methylation by PRMT5 enhances repression activity of metabolic genes in liver in response to bile acid signaling, by increasing interaction with cofactors. Liver. Low levels of expression were detected in heart and pancreas.

The protein localises to the nucleus. It is found in the cytoplasm. In terms of biological role, transcriptional regulator that acts as a negative regulator of receptor-dependent signaling pathways. Specifically inhibits transactivation of the nuclear receptor with which it interacts. Inhibits transcriptional activity of NEUROD1 on E-box-containing promoter by interfering with the coactivation function of the p300/CBP-mediated transcription complex for NEUROD1. Essential component of the liver circadian clock which via its interaction with NR1D1 and RORG regulates NPAS2-mediated hepatic lipid metabolism. Regulates the circadian expression of cytochrome P450 (CYP) enzymes. Represses: NR5A2 and HNF4A to down-regulate CYP2C38, NFLI3 to up-regulate CYP2A5, BHLHE41/HNF1A axis to up-regulate CYP1A2, CYP2E1 and CYP3A11, and NR1D1 to up-regulate CYP2B10, CYP4A10 and CYP4A14. In Homo sapiens (Human), this protein is Nuclear receptor subfamily 0 group B member 2 (NR0B2).